The sequence spans 571 residues: Proline--tRNA ligase (571 aa).

Belongs to the class-II aminoacyl-tRNA synthetase family. ProS type 1 subfamily. Homodimer.

It localises to the cytoplasm. The enzyme catalyses tRNA(Pro) + L-proline + ATP = L-prolyl-tRNA(Pro) + AMP + diphosphate. Its function is as follows. Catalyzes the attachment of proline to tRNA(Pro) in a two-step reaction: proline is first activated by ATP to form Pro-AMP and then transferred to the acceptor end of tRNA(Pro). As ProRS can inadvertently accommodate and process non-cognate amino acids such as alanine and cysteine, to avoid such errors it has two additional distinct editing activities against alanine. One activity is designated as 'pretransfer' editing and involves the tRNA(Pro)-independent hydrolysis of activated Ala-AMP. The other activity is designated 'posttransfer' editing and involves deacylation of mischarged Ala-tRNA(Pro). The misacylated Cys-tRNA(Pro) is not edited by ProRS. This is Proline--tRNA ligase from Photobacterium profundum (strain SS9).